We begin with the raw amino-acid sequence, 278 residues long: Small ribosomal subunit biogenesis GTPase RsgA (278 aa).

The 157-residue stretch at 62-218 (KNTLVRPKVV…ICDTPGFNVI (157 aa)) folds into the CP-type G domain. Residues 112–115 (TKND) and 162–170 (GQSGVGKSS) each bind GTP. Zn(2+) is bound by residues cysteine 241, cysteine 246, histidine 248, and cysteine 254.

Belongs to the TRAFAC class YlqF/YawG GTPase family. RsgA subfamily. As to quaternary structure, monomer. Associates with 30S ribosomal subunit, binds 16S rRNA. The cofactor is Zn(2+).

Its subcellular location is the cytoplasm. One of several proteins that assist in the late maturation steps of the functional core of the 30S ribosomal subunit. Helps release RbfA from mature subunits. May play a role in the assembly of ribosomal proteins into the subunit. Circularly permuted GTPase that catalyzes slow GTP hydrolysis, GTPase activity is stimulated by the 30S ribosomal subunit. The sequence is that of Small ribosomal subunit biogenesis GTPase RsgA from Mycoplasma pneumoniae (strain ATCC 29342 / M129 / Subtype 1) (Mycoplasmoides pneumoniae).